The primary structure comprises 167 residues: Envelope glycoprotein L (167 aa).

Residues 1-20 (MGIFALFAVLWTTLLVTSHA) form the signal peptide. Residues 18-131 (SHAYVALPCC…ADSSIHNVNI (114 aa)) form an interaction with gH region. Residues 142–154 (RTGSVSGSQTRAK) are compositionally biased toward polar residues. Positions 142 to 167 (RTGSVSGSQTRAKSSSRRAHAGQKGK) are disordered. Positions 155–167 (SSSRRAHAGQKGK) are enriched in basic residues.

This sequence belongs to the herpesviridae glycoprotein L family. Interacts with glycoprotein H (gH); this interaction is necessary for the correct processing and cell surface expression of gH. The heterodimer gH/gL seems to interact with gB trimers during fusion. When in complex with gH, interacts with host EPHA2; this interaction triggers EPHA2 phosphorylation and endocytosis, allowing virus entry.

It is found in the virion membrane. Its subcellular location is the host cell membrane. It localises to the host Golgi apparatus. The protein resides in the host trans-Golgi network. In terms of biological role, the heterodimer glycoprotein H-glycoprotein L is required for the fusion of viral and plasma membranes leading to virus entry into the host cell. Acts as a functional inhibitor of gH and maintains gH in an inhibited form. Upon binding to host integrins, gL dissociates from gH leading to activation of the viral fusion glycoproteins gB and gH. Targets heparan sulfate proteoglycans of the syndecan family as well as host EPHA2 to promote viral entry. This Human herpesvirus 8 type P (isolate GK18) (HHV-8) protein is Envelope glycoprotein L.